The following is a 380-amino-acid chain: Tetratricopeptide repeat protein 19, mitochondrial (380 aa).

A mitochondrion-targeting transit peptide spans 1–70 (MFRLLSWSLG…AALAWFSRPA (70 aa)). 5 TPR repeats span residues 136–169 (TYTY…LLGG), 179–212 (IEIS…LEEK), 237–270 (GMCL…SEEI), 279–312 (IVLM…ARQI), and 318–351 (HMVL…AKLK).

This sequence belongs to the TTC19 family. As to quaternary structure, binds to the mature mitochondrial complex III dimer, after the incorporation of the Rieske protein UQCRFS1. Interacts with UQCRC1 and UQCRFS1. Interacts with ZFYVE26 and CHMP4B. Proteolytically cleaved by PARL.

The protein localises to the mitochondrion inner membrane. Required for the preservation of the structural and functional integrity of mitochondrial respiratory complex III by allowing the physiological turnover of the Rieske protein UQCRFS1. Involved in the clearance of UQCRFS1 N-terminal fragments, which are produced upon incorporation of UQCRFS1 into the complex III and whose presence is detrimental for its catalytic activity. This chain is Tetratricopeptide repeat protein 19, mitochondrial (TTC19), found in Homo sapiens (Human).